A 167-amino-acid polypeptide reads, in one-letter code: Protein-export protein SecB (167 aa).

It belongs to the SecB family. As to quaternary structure, homotetramer, a dimer of dimers. One homotetramer interacts with 1 SecA dimer.

The protein localises to the cytoplasm. Functionally, one of the proteins required for the normal export of preproteins out of the cell cytoplasm. It is a molecular chaperone that binds to a subset of precursor proteins, maintaining them in a translocation-competent state. It also specifically binds to its receptor SecA. This Wolbachia pipientis subsp. Culex pipiens (strain wPip) protein is Protein-export protein SecB.